A 548-amino-acid chain; its full sequence is Asparagine--tRNA ligase, cytoplasmic (548 aa).

The interval 1-25 (MVLAELYVSDREGSDATGDGTKEKP) is disordered. Positions 8 to 25 (VSDREGSDATGDGTKEKP) are enriched in basic and acidic residues. Ser-61 is modified (phosphoserine). The segment at 69 to 91 (MWHREQMKSESREKKEAEDSLRR) is disordered. Over residues 71-91 (HREQMKSESREKKEAEDSLRR) the composition is skewed to basic and acidic residues. Lys-244 is subject to N6-acetyllysine. The residue at position 482 (Ser-482) is a Phosphoserine. Lys-490 carries the N6-acetyllysine modification.

Belongs to the class-II aminoacyl-tRNA synthetase family. In terms of assembly, homodimer.

The protein localises to the cytoplasm. The catalysed reaction is tRNA(Asn) + L-asparagine + ATP = L-asparaginyl-tRNA(Asn) + AMP + diphosphate + H(+). In terms of biological role, catalyzes the attachment of asparagine to tRNA(Asn) in a two-step reaction: asparagine is first activated by ATP to form Asn-AMP and then transferred to the acceptor end of tRNA(Asn). In addition to its essential role in protein synthesis, acts as a signaling molecule that induced migration of CCR3-expressing cells. Has an essential role in the development of the cerebral cortex, being required for proper proliferation of radial glial cells. The chain is Asparagine--tRNA ligase, cytoplasmic from Homo sapiens (Human).